The chain runs to 590 residues: Phosphomethylpyrimidine synthase (590 aa).

Substrate contacts are provided by residues Asn197, Met226, Tyr255, His291, 311–313 (SRG), 352–355 (DGLR), and Glu391. Residue His395 coordinates Zn(2+). Residue Tyr418 participates in substrate binding. A Zn(2+)-binding site is contributed by His459. 3 residues coordinate [4Fe-4S] cluster: Cys539, Cys542, and Cys547.

The protein belongs to the ThiC family. It depends on [4Fe-4S] cluster as a cofactor.

It catalyses the reaction 5-amino-1-(5-phospho-beta-D-ribosyl)imidazole + S-adenosyl-L-methionine = 4-amino-2-methyl-5-(phosphooxymethyl)pyrimidine + CO + 5'-deoxyadenosine + formate + L-methionine + 3 H(+). It functions in the pathway cofactor biosynthesis; thiamine diphosphate biosynthesis. In terms of biological role, catalyzes the synthesis of the hydroxymethylpyrimidine phosphate (HMP-P) moiety of thiamine from aminoimidazole ribotide (AIR) in a radical S-adenosyl-L-methionine (SAM)-dependent reaction. This Bacillus subtilis (strain 168) protein is Phosphomethylpyrimidine synthase.